Consider the following 224-residue polypeptide: UPF0173 metal-dependent hydrolase TTHA1283 (224 aa).

Belongs to the UPF0173 family.

This is UPF0173 metal-dependent hydrolase TTHA1283 from Thermus thermophilus (strain ATCC 27634 / DSM 579 / HB8).